The primary structure comprises 275 residues: Large ribosomal subunit protein uL2c (275 aa).

The segment at 28–53 (TPTKSLTHANHRARGRNHSGSITTRW) is disordered.

This sequence belongs to the universal ribosomal protein uL2 family. In terms of assembly, part of the 50S ribosomal subunit.

The protein localises to the plastid. It is found in the chloroplast. In Nephroselmis olivacea (Green alga), this protein is Large ribosomal subunit protein uL2c (rpl2).